The sequence spans 360 residues: S-adenosylmethionine:tRNA ribosyltransferase-isomerase (360 aa).

This sequence belongs to the QueA family. In terms of assembly, monomer.

The protein resides in the cytoplasm. The enzyme catalyses 7-aminomethyl-7-carbaguanosine(34) in tRNA + S-adenosyl-L-methionine = epoxyqueuosine(34) in tRNA + adenine + L-methionine + 2 H(+). Its pathway is tRNA modification; tRNA-queuosine biosynthesis. Its function is as follows. Transfers and isomerizes the ribose moiety from AdoMet to the 7-aminomethyl group of 7-deazaguanine (preQ1-tRNA) to give epoxyqueuosine (oQ-tRNA). In Sinorhizobium medicae (strain WSM419) (Ensifer medicae), this protein is S-adenosylmethionine:tRNA ribosyltransferase-isomerase.